The chain runs to 113 residues: Large ribosomal subunit protein uL24 (113 aa).

It belongs to the universal ribosomal protein uL24 family. Part of the 50S ribosomal subunit.

One of two assembly initiator proteins, it binds directly to the 5'-end of the 23S rRNA, where it nucleates assembly of the 50S subunit. In terms of biological role, one of the proteins that surrounds the polypeptide exit tunnel on the outside of the subunit. The sequence is that of Large ribosomal subunit protein uL24 from Rickettsia typhi (strain ATCC VR-144 / Wilmington).